Here is a 272-residue protein sequence, read N- to C-terminus: MTDYIPTFRFDGHLTIVTGACGGLAEALIKGLLAYGSDIALLDIDQEKTAAKQAEYHKYATEELKLKEVPKMGSYACDISDSDTVHKVFAQVAKDFGKLPLHLVNTAGYCENFPCEDYPAKNAEKMVKVNLLGSLYVSQAFAKPLIKEGIKGASVVLIGSMSGAIVNDPQNQVVYNMSKAGVIHLAKTLACEWAKYNIRVNSLNPGYIYGPLTKNVINGNEELYNRWISGIPQQRMSEPKEYIGAVLYLLSESAASYTTGASLLVDGGFTSW.

2 residues coordinate NADP(+): L24 and D78. S160 functions as the Proton donor in the catalytic mechanism. Residues Y175, K179, and I208 each contribute to the NADP(+) site. Residue Y175 is the Proton acceptor of the active site. Residue K179 is the Lowers pKa of active site Tyr of the active site.

It belongs to the short-chain dehydrogenases/reductases (SDR) family.

The enzyme catalyses xylitol + NAD(+) = L-xylulose + NADH + H(+). It catalyses the reaction D-arabinitol + NAD(+) = D-ribulose + NADH + H(+). In terms of biological role, NADH-dependent L-xylulose reductase; part of the yeast pathway for L-arabinose catabolism. Reversibly converts L-xylulose to xylitol and D-ribulose to D-arabinitol. It has a much lower activity with D-xylulose. Sugar alcohols can serve as a substrate when the hydroxyl group of C-2 is in the L- and the hydroxyl group of the C-3 is in the D-configuration. Also seems to be specific for sugar alcohols that have not more than 5 carbons since no activity is observed with dulcitol (galactitol), which has the hydroxyl group of C-2 in L- and of C-3 in D-configuration, but is a six-carbon sugar alcohol. This is NADH-dependent L-xylulose reductase from Ambrosiozyma monospora (Yeast).